The primary structure comprises 139 residues: Actin-depolymerizing factor 1 (139 aa).

Residues 5-139 enclose the ADF-H domain; that stretch reads ASGMAVHDDC…GLDVIQSRAN (135 aa).

It belongs to the actin-binding proteins ADF family.

Functionally, actin-depolymerizing protein. Severs actin filaments (F-actin) and binds to actin monomers. This chain is Actin-depolymerizing factor 1 (ADF1), found in Petunia hybrida (Petunia).